The chain runs to 465 residues: Sushi repeat-containing protein SRPX2 (465 aa).

An N-terminal signal peptide occupies residues 1–23; sequence MAIQLTRRGALSLLLFLTPAVMP. 3 Sushi domains span residues 69–119, 120–178, and 262–321; these read ATCY…YCRQ, MRCH…VCVD, and RRCP…VCVP. 4 disulfide bridges follow: Cys-71-Cys-105, Cys-91-Cys-117, Cys-122-Cys-163, and Cys-149-Cys-176. The region spanning 177-261 is the HYR domain; the sequence is VDIDPPKIRC…SCKFIVKVQV (85 aa). Intrachain disulfides connect Cys-264/Cys-306 and Cys-292/Cys-319.

As to quaternary structure, forms homooligomers. Interacts with PLAUR (via the UPAR/Ly6 domains), ADAMTS4 and CTSB. Interacts with HGF; the interaction increases the mitogenic activity of HGF. Contains chondroitin sulfate chains.

The protein localises to the secreted. It localises to the cytoplasm. It is found in the cell surface. Its subcellular location is the synapse. Its function is as follows. Acts as a ligand for the urokinase plasminogen activator surface receptor. Plays a role in angiogenesis by inducing endothelial cell migration and the formation of vascular network (cords). Involved in cellular migration and adhesion. Increases the phosphorylation levels of FAK. Interacts with and increases the mitogenic activity of HGF. Promotes synapse formation. The protein is Sushi repeat-containing protein SRPX2 (SRPX2) of Bos taurus (Bovine).